The chain runs to 360 residues: Peptide chain release factor 1 (360 aa).

Glutamine 235 carries the post-translational modification N5-methylglutamine.

This sequence belongs to the prokaryotic/mitochondrial release factor family. Post-translationally, methylated by PrmC. Methylation increases the termination efficiency of RF1.

The protein resides in the cytoplasm. Functionally, peptide chain release factor 1 directs the termination of translation in response to the peptide chain termination codons UAG and UAA. The chain is Peptide chain release factor 1 from Cupriavidus pinatubonensis (strain JMP 134 / LMG 1197) (Cupriavidus necator (strain JMP 134)).